Consider the following 650-residue polypeptide: Flap endonuclease 1 (650 aa).

Positions 1–106 (MGIKGLTKFI…SELEKRGEKR (106 aa)) are N-domain. Position 34 (aspartate 34) interacts with Mg(2+). DNA is bound by residues arginine 47 and arginine 72. Mg(2+) is bound by residues aspartate 88, glutamate 160, glutamate 162, aspartate 181, and aspartate 183. An I-domain region spans residues 124-266 (EIKKQSGRTV…KTAYNLIKEY (143 aa)). Glutamate 160 is a binding site for DNA. Glycine 244 and aspartate 246 together coordinate DNA. Position 246 (aspartate 246) interacts with Mg(2+). An interaction with PCNA region spans residues 349-357 (TQRRLDNFF). Residues 371–592 (ETKKEQTLPA…NSYNNIKNNN (222 aa)) form a disordered region. Basic and acidic residues-rich tracts occupy residues 413-469 (MKEE…KKSL), 478-502 (DSDK…EKIN), and 511-524 (DHSR…KDNI). Over residues 525–562 (SDINNNNNNNNNNSSSNNNNISNNHFNSVSSNSTFNSS) the composition is skewed to low complexity. The segment covering 565 to 581 (LKSEDTLKSNSPLKEDS) has biased composition (basic and acidic residues). Over residues 582–592 (PNSYNNIKNNN) the composition is skewed to low complexity.

Belongs to the XPG/RAD2 endonuclease family. FEN1 subfamily. In terms of assembly, interacts with PCNA1 and PCNA2. Three molecules of FEN1 bind to one PCNA trimer with each molecule binding to one PCNA monomer. PCNA stimulates the nuclease activity without altering cleavage specificity. Mg(2+) is required as a cofactor. In terms of processing, phosphorylated. Phosphorylation upon DNA damage induces relocalization to the nuclear plasma.

It is found in the nucleus. The protein localises to the nucleolus. Its subcellular location is the nucleoplasm. It localises to the mitochondrion. With respect to regulation, inhibited by monovalent metal ions. Structure-specific nuclease with 5'-flap endonuclease and 5'-3' exonuclease activities involved in DNA replication and repair. During DNA replication, cleaves the 5'-overhanging flap structure that is generated by displacement synthesis when DNA polymerase encounters the 5'-end of a downstream Okazaki fragment. It enters the flap from the 5'-end and then tracks to cleave the flap base, leaving a nick for ligation. Also involved in the long patch base excision repair (LP-BER) pathway, by cleaving within the apurinic/apyrimidinic (AP) site-terminated flap. Acts as a genome stabilization factor that prevents flaps from equilibrating into structures that lead to duplications and deletions. Also possesses 5'-3' exonuclease activity on nicked or gapped double-stranded DNA, and exhibits RNase H activity. Also involved in replication and repair of rDNA and in repairing mitochondrial DNA. In Plasmodium falciparum, this protein is Flap endonuclease 1.